A 457-amino-acid polypeptide reads, in one-letter code: Argininosuccinate lyase (457 aa).

The protein belongs to the lyase 1 family. Argininosuccinate lyase subfamily.

The protein localises to the cytoplasm. The enzyme catalyses 2-(N(omega)-L-arginino)succinate = fumarate + L-arginine. Its pathway is amino-acid biosynthesis; L-arginine biosynthesis; L-arginine from L-ornithine and carbamoyl phosphate: step 3/3. The polypeptide is Argininosuccinate lyase (Escherichia coli O157:H7 (strain EC4115 / EHEC)).